The primary structure comprises 363 residues: Glyceraldehyde-3-phosphate dehydrogenase, muscle (363 aa).

Residues 1–176 (MVKVGVNGFG…KYDKSLKIVS (176 aa)) form an interaction with WARS region. At lysine 3 the chain carries N6,N6-dimethyllysine. Asparagine 7 is modified (deamidated asparagine). NAD(+) contacts are provided by residues 11-12 (RI) and aspartate 33. At tyrosine 70 the chain carries Phosphotyrosine. Residue lysine 89 is modified to N6-acetyllysine. Asparagine 92 is subject to Deamidated asparagine. Lysine 94 carries the post-translational modification N6,N6-dimethyllysine. Asparagine 98 is modified (deamidated asparagine). Phosphothreonine is present on threonine 103. NAD(+) is bound by residues arginine 108 and serine 150. Residues serine 150 and serine 176 each carry the phosphoserine modification. Asparagine 177 is subject to Deamidated asparagine. Serine 179 carries the post-translational modification Phosphoserine. Residue 179–181 (SCT) coordinates D-glyceraldehyde 3-phosphate. Residue cysteine 180 is the Nucleophile of the active site. At cysteine 180 the chain carries ADP-ribosylcysteine; by autocatalysis; in irreversibly inhibited form. At cysteine 180 the chain carries Cysteine persulfide. An S-(2-succinyl)cysteine modification is found at cysteine 180. Cysteine 180 bears the S-nitrosocysteine; in reversibly inhibited form mark. Position 181 is a phosphothreonine (threonine 181). Asparagine 183 is modified (deamidated asparagine). A phosphothreonine mark is found at threonine 205, threonine 210, and threonine 212. Position 210 (threonine 210) interacts with D-glyceraldehyde 3-phosphate. Lysine 214 is covalently cross-linked (Glycyl lysine isopeptide (Lys-Gly) (interchain with G-Cter in SUMO2)). At lysine 222 the chain carries N6,N6-dimethyllysine; alternate. Lysine 222 carries the post-translational modification N6-acetyllysine; alternate. Lysine 222 is subject to N6-malonyllysine; alternate. Position 239 is a phosphothreonine (threonine 239). D-glyceraldehyde 3-phosphate is bound at residue 239-240 (TG). Lysine 243 is modified (N6,N6-dimethyllysine; alternate). At lysine 243 the chain carries N6-malonyllysine; alternate. N6-acetyllysine is present on lysine 247. Asparagine 253 carries the post-translational modification Deamidated asparagine. At lysine 255 the chain carries N6,N6-dimethyllysine; alternate. Lysine 255 carries the N6-acetyllysine; alternate modification. Position 257 is a phosphothreonine (threonine 257). Residue arginine 262 participates in D-glyceraldehyde 3-phosphate binding. Threonine 265 is subject to Phosphothreonine. Serine 269 carries the post-translational modification Phosphoserine. Cysteine 275 bears the S-(2-succinyl)cysteine mark. Position 275 is an S-nitrosocysteine (cysteine 275). Position 282 is an N6-acetyllysine (lysine 282). N6,N6-dimethyllysine is present on lysine 291. Position 340 is a phosphoserine (serine 340). Asparagine 344 bears the Deamidated asparagine mark. Asparagine 344 is a binding site for NAD(+). Serine 361 is subject to Phosphoserine. At lysine 362 the chain carries N6,N6-dimethyllysine.

Belongs to the glyceraldehyde-3-phosphate dehydrogenase family. As to quaternary structure, homotetramer. Interacts with TPPP; the interaction is direct. Interacts (when S-nitrosylated) with SIAH1; leading to nuclear translocation. Interacts with RILPL1/GOSPEL, leading to prevent the interaction between GAPDH and SIAH1 and prevent nuclear translocation. Interacts with CHP1; the interaction increases the binding of CHP1 with microtubules. Associates with microtubules. Interacts with EIF1AD, USP25, PRKCI and WARS1. Interacts with phosphorylated RPL13A; inhibited by oxidatively-modified low-densitity lipoprotein (LDL(ox)). Component of the GAIT complex. Interacts with FKBP6; leading to inhibit GAPDH catalytic activity. Interacts with TRAF2, promoting TRAF2 ubiquitination. Interacts with TRAF3, promoting TRAF3 ubiquitination. ISGylated. Post-translationally, S-nitrosylation of Cys-180 leads to interaction with SIAH1, followed by translocation to the nucleus S-nitrosylation of Cys-275 is induced by interferon-gamma and LDL(ox) implicating the iNOS-S100A8/9 transnitrosylase complex and seems to prevent interaction with phosphorylated RPL13A and to interfere with GAIT complex activity. In terms of processing, sulfhydration at Cys-180 increases catalytic activity.

Its subcellular location is the cytoplasm. The protein localises to the cytosol. It is found in the cytoskeleton. The protein resides in the nucleus. It catalyses the reaction D-glyceraldehyde 3-phosphate + phosphate + NAD(+) = (2R)-3-phospho-glyceroyl phosphate + NADH + H(+). It carries out the reaction S-nitroso-L-cysteinyl-[GAPDH] + L-cysteinyl-[protein] = L-cysteinyl-[GAPDH] + S-nitroso-L-cysteinyl-[protein]. It functions in the pathway carbohydrate degradation; glycolysis; pyruvate from D-glyceraldehyde 3-phosphate: step 1/5. Its activity is regulated as follows. Glyceraldehyde-3-phosphate dehydrogenase activity is inhibited by fumarate, via the formation of S-(2-succinyl)cysteine residues. Its function is as follows. Has both glyceraldehyde-3-phosphate dehydrogenase and nitrosylase activities, thereby playing a role in glycolysis and nuclear functions, respectively. Glyceraldehyde-3-phosphate dehydrogenase is a key enzyme in glycolysis that catalyzes the first step of the pathway by converting D-glyceraldehyde 3-phosphate (G3P) into 3-phospho-D-glyceroyl phosphate. Modulates the organization and assembly of the cytoskeleton. Facilitates the CHP1-dependent microtubule and membrane associations through its ability to stimulate the binding of CHP1 to microtubules. Component of the GAIT (gamma interferon-activated inhibitor of translation) complex which mediates interferon-gamma-induced transcript-selective translation inhibition in inflammation processes. Upon interferon-gamma treatment assembles into the GAIT complex which binds to stem loop-containing GAIT elements in the 3'-UTR of diverse inflammatory mRNAs (such as ceruplasmin) and suppresses their translation. Also plays a role in innate immunity by promoting TNF-induced NF-kappa-B activation and type I interferon production, via interaction with TRAF2 and TRAF3, respectively. Participates in nuclear events including transcription, RNA transport, DNA replication and apoptosis. Nuclear functions are probably due to the nitrosylase activity that mediates cysteine S-nitrosylation of nuclear target proteins such as SIRT1, HDAC2 and PRKDC. This chain is Glyceraldehyde-3-phosphate dehydrogenase, muscle, found in Jaculus orientalis (Greater Egyptian jerboa).